A 55-amino-acid chain; its full sequence is ATP synthase F(0) complex subunit 8 (55 aa).

A helical membrane pass occupies residues 4 to 24; it reads LNPAPWFMIFMFTWAIFLTIL. Residues 34-55 form a disordered region; that stretch reads PNEPSPQGMTTPKTAPWNWPWH.

The protein belongs to the ATPase protein 8 family. As to quaternary structure, component of the ATP synthase complex composed at least of ATP5F1A/subunit alpha, ATP5F1B/subunit beta, ATP5MC1/subunit c (homooctomer), MT-ATP6/subunit a, MT-ATP8/subunit 8, ATP5ME/subunit e, ATP5MF/subunit f, ATP5MG/subunit g, ATP5MK/subunit k, ATP5MJ/subunit j, ATP5F1C/subunit gamma, ATP5F1D/subunit delta, ATP5F1E/subunit epsilon, ATP5PF/subunit F6, ATP5PB/subunit b, ATP5PD/subunit d, ATP5PO/subunit OSCP. ATP synthase complex consists of a soluble F(1) head domain (subunits alpha(3) and beta(3)) - the catalytic core - and a membrane F(0) domain - the membrane proton channel (subunits c, a, 8, e, f, g, k and j). These two domains are linked by a central stalk (subunits gamma, delta, and epsilon) rotating inside the F1 region and a stationary peripheral stalk (subunits F6, b, d, and OSCP).

Its subcellular location is the mitochondrion membrane. Functionally, subunit 8, of the mitochondrial membrane ATP synthase complex (F(1)F(0) ATP synthase or Complex V) that produces ATP from ADP in the presence of a proton gradient across the membrane which is generated by electron transport complexes of the respiratory chain. ATP synthase complex consist of a soluble F(1) head domain - the catalytic core - and a membrane F(1) domain - the membrane proton channel. These two domains are linked by a central stalk rotating inside the F(1) region and a stationary peripheral stalk. During catalysis, ATP synthesis in the catalytic domain of F(1) is coupled via a rotary mechanism of the central stalk subunits to proton translocation. In vivo, can only synthesize ATP although its ATP hydrolase activity can be activated artificially in vitro. Part of the complex F(0) domain. The protein is ATP synthase F(0) complex subunit 8 of Gadus morhua (Atlantic cod).